A 188-amino-acid polypeptide reads, in one-letter code: Large ribosomal subunit protein uL5 (188 aa).

The protein belongs to the universal ribosomal protein uL5 family. Part of the 50S ribosomal subunit; contacts the 5S rRNA and probably tRNA. Forms a bridge to the 30S subunit in the 70S ribosome.

This is one of the proteins that bind and probably mediate the attachment of the 5S RNA into the large ribosomal subunit, where it forms part of the central protuberance. In the 70S ribosome it contacts protein S13 of the 30S subunit (bridge B1b), connecting the 2 subunits; this bridge is implicated in subunit movement. May contact the P site tRNA; the 5S rRNA and some of its associated proteins might help stabilize positioning of ribosome-bound tRNAs. This Pyrococcus abyssi (strain GE5 / Orsay) protein is Large ribosomal subunit protein uL5.